The chain runs to 238 residues: MNRNINFNTEMSIFEHLEELRQRIFIAALIFIVITAICFTYMKNISYILQQPAIGIKFLQLAPGEYLFTSIKVALYSGFLLSSPFIIYQITLFILPGLTKKESNFIVPILFISIILFFSGIVFAYIILVPAALKFLINYGNEIVEPIWSFEQYFNFILLLLFSTGIAFQIPIIQVILGILKIFSSSEMYAYWKYIVLGATVIAAIITPSTDPITQIIMSIAILALYSSGIIILKILNK.

6 helical membrane passes run 24-44, 78-98, 109-129, 156-176, 188-208, and 216-236; these read IFIAALIFIVITAICFTYMKN, GFLLSSPFIIYQITLFILPGL, ILFISIILFFSGIVFAYIILV, FILLLLFSTGIAFQIPIIQVI, MYAYWKYIVLGATVIAAIITP, and IIMSIAILALYSSGIIILKIL.

This sequence belongs to the TatC family.

The protein localises to the plastid. It localises to the chloroplast membrane. This is an uncharacterized protein from Gracilaria tenuistipitata var. liui (Red alga).